A 798-amino-acid polypeptide reads, in one-letter code: Probable G-protein coupled receptor 156 (798 aa).

The Extracellular portion of the chain corresponds to 1-49; that stretch reads MEPEINCSEFCDSFPGQELDRRPLHDLCKTTITESQHSSTAASPLSPAL. A glycan (N-linked (GlcNAc...) asparagine) is linked at asparagine 6. The helical transmembrane segment at 50–70 threads the bilayer; it reads LGIMWTFLSCGLLLVLFFLAF. At 71 to 86 the chain is on the cytoplasmic side; it reads TIRCRKNRIVKMSSPN. A helical membrane pass occupies residues 87–107; it reads LNVVTLLGSCLTYISAYLFGI. Residues 108 to 118 are Extracellular-facing; the sequence is QDALEGSSVEA. Residues 119 to 139 form a helical membrane-spanning segment; sequence LIQTRLSLLCIGTSLVFGPIL. Over 140 to 164 the chain is Cytoplasmic; that stretch reads GKSWRLYKVFTQRVPDKRVIIKDLQ. A helical membrane pass occupies residues 165–185; the sequence is LLGLVAALVVADVILLVTWVL. Over 186–222 the chain is Extracellular; the sequence is TDPIQCLQMLGVSMKVTGRDVSCSLTNTHFCASRYSD. The helical transmembrane segment at 223–243 threads the bilayer; sequence VWIALVLGCKGLLLLYGAYLA. Residues 244–257 lie on the Cytoplasmic side of the membrane; that stretch reads GLTNHVSSPPVNQS. Residues 258–278 form a helical membrane-spanning segment; the sequence is LTIMVGVNLLLLTAGLLFVVT. Residues 279–288 are Extracellular-facing; sequence RYLHSWPNLV. The chain crosses the membrane as a helical span at residues 289-309; the sequence is FGLTSGGIFVCTTTVNCCVFI. Over 310-798 the chain is Cytoplasmic; that stretch reads PQLKQWKAFE…FKDDLKPTLV (489 aa). Residues 353–390 are a coiled coil; it reads DEKSCMERLLTEKNAVIESLQEQVSNAKEKLVKLMSAE. 3 disordered regions span residues 441–497, 546–666, and 693–715; these read HVQG…PMAP, SEAP…KQCE, and PAAP…PRLS. Over residues 479-492 the composition is skewed to basic and acidic residues; that stretch reads PKAEQSEGPERGDQ. Polar residues predominate over residues 559-572; the sequence is LWKSTTSRSPQKLS. Over residues 583–594 the composition is skewed to basic residues; sequence VRRRRAAQRARS. Residues 606–624 are compositionally biased toward polar residues; sequence HQANSTVSSSQSGLIVQNR. The span at 639 to 648 shows a compositional bias: low complexity; it reads PRSSSVKPSP.

It belongs to the G-protein coupled receptor 3 family. GABA-B receptor subfamily. In terms of tissue distribution, expressed in the outer and inner hair cells of the organ of Corti (at protein level). Expressed in the utricle and saccule within the vestibule (at protein level).

The protein localises to the cell membrane. The protein resides in the postsynaptic cell membrane. Its function is as follows. Orphan G-protein coupled receptor involved in the regulation of hair cell orientation in mechanosensory organs of the inner ear. It is required to trigger a 180 degree reversal in hair cell orientation, creating a virtual line of polarity reversal (LPR) across which stereociliary bundles are arranged in opposite orientations. This is Probable G-protein coupled receptor 156 (Gpr156) from Mus musculus (Mouse).